Reading from the N-terminus, the 661-residue chain is UvrABC system protein C (661 aa).

The 79-residue stretch at 52–130 (HKPGVYRMVD…IKRLHPRFNV (79 aa)) folds into the GIY-YIG domain. Positions 240 to 275 (QSIKNDMVQAMHKAAKNFDFEQAAAYRDRLSALSHI) constitute a UVR domain.

It belongs to the UvrC family. In terms of assembly, interacts with UvrB in an incision complex.

Its subcellular location is the cytoplasm. In terms of biological role, the UvrABC repair system catalyzes the recognition and processing of DNA lesions. UvrC both incises the 5' and 3' sides of the lesion. The N-terminal half is responsible for the 3' incision and the C-terminal half is responsible for the 5' incision. In Bartonella henselae (strain ATCC 49882 / DSM 28221 / CCUG 30454 / Houston 1) (Rochalimaea henselae), this protein is UvrABC system protein C.